We begin with the raw amino-acid sequence, 463 residues long: Aurantioclavine synthase cnsA (463 aa).

The FAD-binding PCMH-type domain maps to 16–199 (ERFNQRGNVF…TQATVRVFPD (184 aa)).

It belongs to the oxygen-dependent FAD-linked oxidoreductase family. Requires FAD as cofactor.

It participates in alkaloid biosynthesis. Functionally, FAD-linked oxidoreductase; part of the gene cluster that mediates the biosynthesis of communesins, a prominent class of indole alkaloids with great potential as pharmaceuticals. Communesins are biosynthesized by the coupling of tryptamine and aurantioclavine, two building blocks derived from L-tryptophan. The L-tryptophan decarboxylase cnsB converts L-tryptophan to tryptamine, whereas the tryptophan dimethylallyltransferase cnsF converts L-tryptophan to 4-dimethylallyl tryptophan which is further transformed to aurantioclavine by the aurantioclavine synthase cnsA, probably aided by the catalase cnsD. The cytochrome P450 monooxygenase cnsC catalyzes the heterodimeric coupling between the two different indole moieties, tryptamine and aurantioclavine, to construct vicinal quaternary stereocenters and yield the heptacyclic communesin scaffold. The O-methyltransferase cnsE then methylates the communesin scaffold to produce communesin K, the simplest characterized communesin that contains the heptacyclic core. The dioxygenase cnsJ converts communesin K into communesin I. Acylation to introduce the hexadienyl group at position N16 of communesin I by the acyltransferase cnsK leads to the production of communesin B. The hexadienyl group is produced by the highly reducing polyketide synthase cnsI, before being hydrolytically removed from cnsI by the serine hydrolase cnsH, converted into hexadienyl-CoA by the CoA ligase cnsG, and then transferred to communesin I by cnsK. Surprisingly, cnsK may also be a promiscuous acyltransferase that can tolerate a range of acyl groups, including acetyl-, propionyl-, and butyryl-CoA, which lead to communesins A, G and H respectively. The roles of the alpha-ketoglutarate-dependent dioxygenases cnsM and cnsP have still to be determined. In Penicillium expansum (Blue mold rot fungus), this protein is Aurantioclavine synthase cnsA.